Consider the following 391-residue polypeptide: Serpin B13 (391 aa).

Belongs to the serpin family. Ov-serpin subfamily. As to expression, skin specific.

Its subcellular location is the cytoplasm. Its function is as follows. May play a role in the proliferation or differentiation of keratinocytes. The polypeptide is Serpin B13 (SERPINB13) (Homo sapiens (Human)).